Here is a 367-residue protein sequence, read N- to C-terminus: Flagellar P-ring protein (367 aa).

The N-terminal stretch at 1–22 (MRRMLVIRWILAIHLIATQVFA) is a signal peptide.

The protein belongs to the FlgI family. The basal body constitutes a major portion of the flagellar organelle and consists of four rings (L,P,S, and M) mounted on a central rod.

The protein localises to the periplasm. It is found in the bacterial flagellum basal body. In terms of biological role, assembles around the rod to form the L-ring and probably protects the motor/basal body from shearing forces during rotation. This Legionella pneumophila (strain Lens) protein is Flagellar P-ring protein.